The chain runs to 201 residues: Holliday junction resolvase RecU (201 aa).

Residues Thr87, Asp89, Glu102, and Gln121 each contribute to the Mg(2+) site.

It belongs to the RecU family. Mg(2+) serves as cofactor.

It localises to the cytoplasm. It catalyses the reaction Endonucleolytic cleavage at a junction such as a reciprocal single-stranded crossover between two homologous DNA duplexes (Holliday junction).. Functionally, endonuclease that resolves Holliday junction intermediates in genetic recombination. Cleaves mobile four-strand junctions by introducing symmetrical nicks in paired strands. Promotes annealing of linear ssDNA with homologous dsDNA. Required for DNA repair, homologous recombination and chromosome segregation. The protein is Holliday junction resolvase RecU of Listeria welshimeri serovar 6b (strain ATCC 35897 / DSM 20650 / CCUG 15529 / CIP 8149 / NCTC 11857 / SLCC 5334 / V8).